We begin with the raw amino-acid sequence, 532 residues long: 2-isopropylmalate synthase (532 aa).

The 263-residue stretch at 5-267 (VIIFDTTLRD…HTNINHQEIY (263 aa)) folds into the Pyruvate carboxyltransferase domain. Mn(2+) is bound by residues D14, H202, H204, and N238. The interval 392 to 532 (HLDYFSVQSG…SKQQNSQETV (141 aa)) is regulatory domain. Residues 513–532 (QQHNNQQQNDSKQQNSQETV) form a disordered region.

It belongs to the alpha-IPM synthase/homocitrate synthase family. LeuA type 1 subfamily. As to quaternary structure, homodimer. Requires Mn(2+) as cofactor.

It localises to the cytoplasm. The catalysed reaction is 3-methyl-2-oxobutanoate + acetyl-CoA + H2O = (2S)-2-isopropylmalate + CoA + H(+). It participates in amino-acid biosynthesis; L-leucine biosynthesis; L-leucine from 3-methyl-2-oxobutanoate: step 1/4. Its function is as follows. Catalyzes the condensation of the acetyl group of acetyl-CoA with 3-methyl-2-oxobutanoate (2-ketoisovalerate) to form 3-carboxy-3-hydroxy-4-methylpentanoate (2-isopropylmalate). The chain is 2-isopropylmalate synthase from Pectobacterium atrosepticum (strain SCRI 1043 / ATCC BAA-672) (Erwinia carotovora subsp. atroseptica).